We begin with the raw amino-acid sequence, 347 residues long: MGSESESVCVTGASGFIGSWLVMRLLEHGYTVRATVRDPTNQKKVKHLLDLPKAETHLTLWKADLADEGSFDEAIQGCSGVFHVATPMDFESRDPENEVIKPTINGLLDILKACQKAKTVRKLVFTSSAGTVNVEEHQKPVYDESNWSDVEFCRSVKMTGWMYFVSKTLAEQAAWKYAKENNIDFITIIPTLVIGPFLMPSMPPSLITGLSPILRNESHYGIIKQGQYVHLDDLCLSHIYLYKHPKAEGRYICSSHDATIHELVKMLREKYPEYNIPTKFKGIDDNLEPVHFSSKKLREIGFEFKYSLEDMFVGAVDACRAKGLIPIPAEKTEAAEESNLVDVKVGS.

Residues Lys-44 and Tyr-163 each contribute to the NADP(+) site.

It belongs to the NAD(P)-dependent epimerase/dehydratase family. Dihydroflavonol-4-reductase subfamily.

It carries out the reaction a (2R,3S,4S)-leucoanthocyanidin + NADP(+) = a (2R,3R)-dihydroflavonol + NADPH + H(+). It catalyses the reaction (2S)-flavan-4-ol + NADP(+) = (2S)-flavanone + NADPH + H(+). Bifunctional enzyme involved in the flavonoid metabolism. May use dihydroquercetin, eriodictyol, garbanzol (5-deoxydihydrokaempferol), dihydrofisetin (5-deoxydihydroquercetin), dihydrokaempferol to a low extent (5%), but not naringenin, 5-deoxynaringenin or butin (5-deoxyeriodictyol) as substrate. This chain is Bifunctional dihydroflavonol 4-reductase/flavanone 4-reductase (DFR), found in Pyrus communis (Pear).